We begin with the raw amino-acid sequence, 579 residues long: Methionine--tRNA ligase (579 aa).

The short motif at 14–24 is the 'HIGH' region element; the sequence is PYINGVKHLGN. Positions 146, 149, 159, and 162 each coordinate Zn(2+). The short motif at 346 to 350 is the 'KMSKS' region element; it reads KFSTS. Thr349 is an ATP binding site.

Belongs to the class-I aminoacyl-tRNA synthetase family. MetG type 1 subfamily. In terms of assembly, monomer. It depends on Zn(2+) as a cofactor.

The protein resides in the cytoplasm. It catalyses the reaction tRNA(Met) + L-methionine + ATP = L-methionyl-tRNA(Met) + AMP + diphosphate. In terms of biological role, is required not only for elongation of protein synthesis but also for the initiation of all mRNA translation through initiator tRNA(fMet) aminoacylation. The polypeptide is Methionine--tRNA ligase (Hyphomonas neptunium (strain ATCC 15444)).